Consider the following 137-residue polypeptide: Putative pre-16S rRNA nuclease (137 aa).

It belongs to the YqgF nuclease family.

The protein resides in the cytoplasm. In terms of biological role, could be a nuclease involved in processing of the 5'-end of pre-16S rRNA. This is Putative pre-16S rRNA nuclease from Buchnera aphidicola subsp. Schizaphis graminum (strain Sg).